Consider the following 272-residue polypeptide: Exosome complex component Rrp42 (272 aa).

This sequence belongs to the RNase PH family. Rrp42 subfamily. Component of the archaeal exosome complex. Forms a hexameric ring-like arrangement composed of 3 Rrp41-Rrp42 heterodimers. The hexameric ring associates with a trimer of Rrp4 and/or Csl4 subunits.

It localises to the cytoplasm. Non-catalytic component of the exosome, which is a complex involved in RNA degradation. Contributes to the structuring of the Rrp41 active site. In Thermococcus onnurineus (strain NA1), this protein is Exosome complex component Rrp42.